Here is a 251-residue protein sequence, read N- to C-terminus: Triosephosphate isomerase (251 aa).

Residues N10 and K12 each coordinate substrate. H96 serves as the catalytic Electrophile. E168 functions as the Proton acceptor in the catalytic mechanism.

Belongs to the triosephosphate isomerase family. Homodimer.

It catalyses the reaction D-glyceraldehyde 3-phosphate = dihydroxyacetone phosphate. It functions in the pathway carbohydrate biosynthesis; gluconeogenesis. It participates in carbohydrate degradation; glycolysis; D-glyceraldehyde 3-phosphate from glycerone phosphate: step 1/1. In Aspergillus oryzae (strain ATCC 42149 / RIB 40) (Yellow koji mold), this protein is Triosephosphate isomerase (tpiA).